Consider the following 611-residue polypeptide: Major facilitator superfamily domain-containing protein YCR023C (611 aa).

Over 1–89 (MARQKLTFKE…GRFSEKHGRK (89 aa)) the chain is Extracellular. A helical transmembrane segment spans residues 90-110 (ITLTCGLIGTSVSLLILGFSR). The Cytoplasmic portion of the chain corresponds to 111–152 (NFYQALVARSLMGLLNGNVGVIRTIIGEIATERKHQALAFST). Residues 153-173 (MPLLFQFGAVVGPMIGGFLVF) form a helical membrane-spanning segment. The Extracellular segment spans residues 174 to 199 (RDGTMNEVPLWFPHFAKRIIRSYPYA). A helical transmembrane segment spans residues 200–220 (LPNVVVCMFLMFGLTNATLFL). The Cytoplasmic segment spans residues 221–353 (EETHPAFKDR…SIFHHVFHTK (133 aa)). The segment covering 261-271 (DDSENIHHRNE) has biased composition (basic and acidic residues). The segment at 261 to 301 (DDSENIHHRNENVNSIRGQDSEEDENSPLVNTTNDDDTESI) is disordered. S313 is subject to Phosphoserine. Residues 354 to 372 (VFYPISVNFIMALHLIVYN) traverse the membrane as a helical segment. Residues 373 to 413 (EFLPVFLAYDLAVDPENPKKLASKFPWKISGGIGYEPEQTG) lie on the Extracellular side of the membrane. The helical transmembrane segment at 414-434 (TLLSTTGIFGCFVVIFIFPIV) threads the bilayer. At 435-442 (DRNFDCLT) the chain is on the cytoplasmic side. A helical transmembrane segment spans residues 443–463 (IFRTLVKLYPIMYVMVPYVVF). The Extracellular portion of the chain corresponds to 464–542 (LQNERIPSWY…YIMSWSQQND (79 aa)). Residues 543–563 (VAWVSWWSLSLFCMVALYQSY) form a helical membrane-spanning segment. Over 564–611 (KIAPIDDNENELHGQGSEDAYNSQSQSSDLRMAHRSSLSSLSNQRCTT) the chain is Cytoplasmic. S603 carries the post-translational modification Phosphoserine.

This sequence belongs to the major facilitator superfamily.

Its subcellular location is the membrane. It carries out the reaction chloride(in) = chloride(out). In terms of biological role, outward-rectifying chloride channel involved in chloride homeostasis. This Saccharomyces cerevisiae (strain ATCC 204508 / S288c) (Baker's yeast) protein is Major facilitator superfamily domain-containing protein YCR023C.